Reading from the N-terminus, the 255-residue chain is Hydroxyacylglutathione hydrolase (255 aa).

Zn(2+) is bound by residues H56, H58, D60, H61, H112, D129, and H167.

Belongs to the metallo-beta-lactamase superfamily. Glyoxalase II family. As to quaternary structure, monomer. Zn(2+) is required as a cofactor.

The catalysed reaction is an S-(2-hydroxyacyl)glutathione + H2O = a 2-hydroxy carboxylate + glutathione + H(+). The protein operates within secondary metabolite metabolism; methylglyoxal degradation; (R)-lactate from methylglyoxal: step 2/2. Thiolesterase that catalyzes the hydrolysis of S-D-lactoyl-glutathione to form glutathione and D-lactic acid. The polypeptide is Hydroxyacylglutathione hydrolase (Pseudomonas fluorescens (strain SBW25)).